The sequence spans 353 residues: Aliphatic aldoxime dehydratase (353 aa).

Serine 219 is an an aliphatic aldoxime binding site. Heme b is bound at residue histidine 299. Residue histidine 320 coordinates an aliphatic aldoxime. The active site involves histidine 320.

This sequence belongs to the heme-containing dehydratase family. In terms of assembly, homodimer. Heme b is required as a cofactor.

It carries out the reaction an aliphatic aldoxime = a nitrile + H2O. With respect to regulation, active when the heme iron is in the ferrous state. Activated by FMN, Fe(2+), Sn(2+), Na(2)SO(3), Na(2)S and vitamin K3. Its function is as follows. Catalyzes the dehydration of aldoximes to their corresponding nitrile. Is active toward various arylalkyl- and alkyl-aldoximes, and to a lesser extent toward aryl-aldoximes. The protein is Aliphatic aldoxime dehydratase of Rhodococcus globerulus.